We begin with the raw amino-acid sequence, 227 residues long: Phosphoglycolate phosphatase (227 aa).

The active-site Nucleophile is the Asp-14. Mg(2+) is bound by residues Asp-14, Asp-16, and Asp-177.

It belongs to the HAD-like hydrolase superfamily. CbbY/CbbZ/Gph/YieH family. The cofactor is Mg(2+).

The catalysed reaction is 2-phosphoglycolate + H2O = glycolate + phosphate. It participates in organic acid metabolism; glycolate biosynthesis; glycolate from 2-phosphoglycolate: step 1/1. Functionally, specifically catalyzes the dephosphorylation of 2-phosphoglycolate. Is involved in the dissimilation of the intracellular 2-phosphoglycolate formed during the DNA repair of 3'-phosphoglycolate ends, a major class of DNA lesions induced by oxidative stress. The polypeptide is Phosphoglycolate phosphatase (Thiobacillus denitrificans (strain ATCC 25259 / T1)).